We begin with the raw amino-acid sequence, 918 residues long: Glutamate receptor 2.5 (918 aa).

An N-terminal signal peptide occupies residues 1 to 30 (MSLFHHLVSRFLSLWLLIFLVFLVLSLGKS). Topologically, residues 31-586 (QKEALQVKVG…WVFLKPLTKE (556 aa)) are extracellular. 6 N-linked (GlcNAc...) asparagine glycosylation sites follow: N46, N58, N122, N336, N340, and N546. Residues 587–607 (LWLVTAASFLYIGIMVWIFEY) form a helical membrane-spanning segment. The Cytoplasmic segment spans residues 608 to 616 (QADEEFREQ). The chain crosses the membrane as a helical span at residues 617 to 637 (MIIDKISSVFYFSFSTLFFAH). Residues 638-647 (RRPSESFFTR) lie on the Cytoplasmic side of the membrane. A helical membrane pass occupies residues 648 to 668 (VLVVVWCFVLLILTQSYTATL). Over 669–828 (TSMLTVQELR…DSPIQLDHHS (160 aa)) the chain is Extracellular. N-linked (GlcNAc...) asparagine glycosylation is present at N791. Residues 829–849 (FEALFLIVFVVSVILLLLMLA) form a helical membrane-spanning segment. Topologically, residues 850 to 918 (SRGYQERQHN…VAPLSRLKSA (69 aa)) are cytoplasmic. Positions 857 to 881 (QHNASPNLPNDQANAAQEEVNEEGN) are disordered. Over residues 866–881 (NDQANAAQEEVNEEGN) the composition is skewed to low complexity.

It belongs to the glutamate-gated ion channel (TC 1.A.10.1) family. May form heteromers. Expressed predominantly in roots.

It is found in the membrane. Functionally, glutamate-gated receptor that probably acts as a non-selective cation channel. May be involved in light-signal transduction and calcium homeostasis via the regulation of calcium influx into cells. The protein is Glutamate receptor 2.5 (GLR2.5) of Arabidopsis thaliana (Mouse-ear cress).